The sequence spans 198 residues: N-acetyltransferase 9-like protein (198 aa).

An N-acetyltransferase domain is found at 14–186 (IILVPYKEKH…SNNFTNLTAD (173 aa)).

The protein belongs to the acetyltransferase family. GNAT subfamily.

This Nematostella vectensis (Starlet sea anemone) protein is N-acetyltransferase 9-like protein (nat9).